The primary structure comprises 358 residues: MGSIEEVKKESAEETLGRLLRGEINDEELKKLIKYQLEKRLQWGYKSSHQEQLSFNLDFINSLKKMGMSGQVEAFTNEVYELPTECFEAAYGKSMKLSGCYFKHESSTIDEAEEASHELYCERAQIKDGQTVLDIGCGQGGLVLYVAQKYKNCHVTGLTNSKEQVNYILKQAEKLGLRNVDVILADVTQYESDKTYDRILVIGVVEHMKNMQLFIKKLSTWMAEDSLLFVDHSCHKTFNHFFEALDEDDWYSGYIFPPGCATFLSADSLLYFQDDVSVVDHWVVNGMHFARTVDAWRKKLDKNMEAVKEILLPGLGGNHEAVNGVITHIRTCCVGGYVQFSLNDGDEWMNAQLLFKKK.

S-adenosyl-L-methionine contacts are provided by Ser98, Gly136, Asn160, Gln164, Asp186, Val187, and Ile202. Cys333 is a catalytic residue.

Belongs to the CFA/CMAS family. Homodimer.

Its subcellular location is the cytoplasm. It catalyses the reaction (S)-stylopine + S-adenosyl-L-methionine = (S)-cis-N-methylstylopine + S-adenosyl-L-homocysteine. The enzyme catalyses (S)-tetrahydropalmatine + S-adenosyl-L-methionine = (S)-cis-N-methyltetrahydropalmatine + S-adenosyl-L-homocysteine. It functions in the pathway alkaloid biosynthesis. N-methyltransferase with a strict substrate specificity for (R,S)-tetrahydropalmatine or (R,S)-stylopine. The chain is Probable (S)-tetrahydroprotoberberine N-methyltransferase 2 from Papaver bracteatum (Great scarlet poppy).